The sequence spans 508 residues: Pyruvate kinase (508 aa).

A substrate-binding site is contributed by arginine 56. K(+) is bound by residues asparagine 58, serine 60, aspartate 90, and threonine 91. 58–61 (NFSH) contributes to the ATP binding site. Arginine 97 and lysine 185 together coordinate ATP. Glutamate 251 contributes to the Mg(2+) binding site. Substrate contacts are provided by glycine 274, aspartate 275, and threonine 307. Aspartate 275 provides a ligand contact to Mg(2+).

The protein belongs to the pyruvate kinase family. In terms of assembly, homotetramer. It depends on Mg(2+) as a cofactor. Requires K(+) as cofactor.

The catalysed reaction is pyruvate + ATP = phosphoenolpyruvate + ADP + H(+). It participates in carbohydrate degradation; glycolysis; pyruvate from D-glyceraldehyde 3-phosphate: step 5/5. With respect to regulation, regulated by phosphoenolpyruvate substrate and is allosterically activated by ribose-5-phosphate, AMP and other nucleoside monophosphates but not by fructose-1,6-bisphosphate. This is Pyruvate kinase (pyk) from Mycoplasma genitalium (strain ATCC 33530 / DSM 19775 / NCTC 10195 / G37) (Mycoplasmoides genitalium).